We begin with the raw amino-acid sequence, 660 residues long: Potassium voltage-gated channel subfamily KQT member 1 (660 aa).

The span at 1 to 18 (MSSEVKSRWSGSGSQKSG) shows a compositional bias: polar residues. A disordered region spans residues 1–67 (MSSEVKSRWS…PESRAADSRA (67 aa)). Topologically, residues 1–113 (MSSEVKSRWS…YNFLERPTGW (113 aa)) are cytoplasmic. The span at 53–67 (STDKNPESRAADSRA) shows a compositional bias: basic and acidic residues. Residues 114-135 (KCFIYHFTVFLIVLVCLIFSVM) traverse the membrane as a helical segment. Residues 136-146 (STIEQYHYFAN) are Extracellular-facing. The helical transmembrane segment at 147 to 169 (RALVWMEIVLVVFFGTEYIVRLW) threads the bilayer. At 170–185 (SAGCRSKYVGFWGRLR) the chain is on the cytoplasmic side. Residues 186–211 (FARKPISIIDLIVVVASVIVLCVGSN) traverse the membrane as a helical segment. At 212 to 219 (GQVFATSA) the chain is on the extracellular side. Residues 220–235 (IRGIRFLQILRMLHVD) form a helical; Voltage-sensor membrane-spanning segment. Topologically, residues 236 to 253 (RQGGTWRLLGSVVFIHRQ) are cytoplasmic. Glutamine 237 serves as a coordination point for a 1,2-diacyl-sn-glycero-3-phospho-(1D-myo-inositol-4,5-bisphosphate). A helical transmembrane segment spans residues 254-276 (ELITTLYIGFLGLIFSSYFVYLA). Residues 277–292 (EKDAVDDSGSQQFGSY) lie on the Extracellular side of the membrane. Positions 293–313 (ADALWWGVVTVTTIGYGDKVP) form an intramembrane region, pore-forming. Over 314–315 (QT) the chain is Extracellular. A helical membrane pass occupies residues 316–341 (WIGRTIASCFSVFAISFFALPAGILG). Over 342–660 (SGFALKVQQK…RKDQDNQPDL (319 aa)) the chain is Cytoplasmic. Residues 399-426 (SPSPKTKKSVGKRKKLKTDKDNGLNSEK) form a disordered region. Basic residues predominate over residues 403–415 (KTKKSVGKRKKLK). Residues 579 to 615 (KNTIGARLNRVEEKFVHMDQKLNTITDMLHHLVAHQQ) are a coiled coil.

The protein belongs to the potassium channel family. KQT (TC 1.A.1.15) subfamily. Kv7.1/KCNQ1 sub-subfamily. In terms of assembly, tetramer. Heterotetramer with KCNE1; targets to the membrane raft. Interacts (via C-terminus) with CALM; forms a heterotetramer in a calcium-independent manner. Interacts with KCNE2; form a heterooligomer complex that targets to the membrane raft and leading to currents with an apparently instantaneous activation, a rapid deactivation process and a linear current-voltage relationship and decreases the amplitude of the outward current. Interacts with KCNE3; four KCNE3 molecules are bound to one KCNQ1 tetramer (4:4 KCNQ1:KCNE3 stoichiometry); alters membrane raft localization; affects KCNQ1 structure and gating properties. Interacts with KCNE4; impairs KCNQ1 localization in lipid rafts and inhibits voltage-gated potassium channel activity. Interacts with KCNE5; impairs KCNQ1 localization in lipid rafts and only conducts current upon strong and continued depolarization. Expressed only in rectal gland and heart. Faintly expressed in intestine. Undetectable in kidney, brain, testis, liver and gills.

Its subcellular location is the cell membrane. The protein resides in the cytoplasmic vesicle membrane. The protein localises to the membrane raft. It localises to the endoplasmic reticulum. It is found in the basolateral cell membrane. The catalysed reaction is K(+)(in) = K(+)(out). With respect to regulation, PIP2 molecule is essential to activate KCNQ channels by inducing the coupling of the voltage-sensing domain (VSD) and the pore-forming domain (PD). Upon channel activation, PIP2 disrupts the VSD-calmodulin/CALM interactions, causing the release of CALM from the VSD which triggers the opening of the gate. Calcium potentiates KCNQ1 channel current through calcium-bound CALM. Calcium-bound CALM competes with PIP2 to stabilize the channel open state. In terms of biological role, pore-forming subunit of the voltage-gated potassium (Kv) channel involved in the regulation of cardiomyocyte excitability and important in normal development and functions of myocardium, inner ear, stomach and colon. Associates with KCNE beta subunits that modulates current kinetics. Induces a voltage-dependent by rapidly activating and slowly deactivating potassium-selective outward current. Also promotes a delayed voltage activated potassium current showing outward rectification characteristic. During beta-adrenergic receptor stimulation participates in cardiac repolarization by associating with KCNE1 to form the I(Ks) cardiac potassium current that increases the amplitude and slows down the activation kinetics of outward potassium current I(Ks). When associated with KCNE3, forms the potassium channel that is important for cyclic AMP-stimulated intestinal secretion of chloride ions. When associated with KCNE2, forms a heterooligomer complex leading to currents with an apparently instantaneous activation, a rapid deactivation process and a linear current-voltage relationship and decreases the amplitude of the outward current. When associated with KCNE4, inhibits voltage-gated potassium channel activity. When associated with KCNE5, this complex only conducts current upon strong and continued depolarization. The polypeptide is Potassium voltage-gated channel subfamily KQT member 1 (Squalus acanthias (Spiny dogfish)).